We begin with the raw amino-acid sequence, 627 residues long: Threonine--tRNA ligase (627 aa).

The segment at 1–147 (MRMLLIHSDY…TIVPSGEAKA (147 aa)) is editing domain. The segment at 208 to 507 (PHVRIMLEQE…QSKGIKPMFP (300 aa)) is catalytic. The Zn(2+) site is built by Cys300, His352, and His476.

Belongs to the class-II aminoacyl-tRNA synthetase family. In terms of assembly, homodimer. It depends on Zn(2+) as a cofactor.

The protein resides in the cytoplasm. The catalysed reaction is tRNA(Thr) + L-threonine + ATP = L-threonyl-tRNA(Thr) + AMP + diphosphate + H(+). Its function is as follows. Catalyzes the attachment of threonine to tRNA(Thr) in a two-step reaction: L-threonine is first activated by ATP to form Thr-AMP and then transferred to the acceptor end of tRNA(Thr). Also edits incorrectly charged L-seryl-tRNA(Thr). The polypeptide is Threonine--tRNA ligase (Thermococcus onnurineus (strain NA1)).